A 429-amino-acid chain; its full sequence is UPF0053 protein YugS (429 aa).

A run of 4 helical transmembrane segments spans residues 1 to 21 (MLIL…VFVA), 61 to 81 (ACQL…EPTF), 101 to 121 (IVTF…MGEL), and 133 to 153 (AVSL…YPFI). The CNNM transmembrane domain occupies 1–201 (MLILQLIAIF…YEKGEINQSE (201 aa)). CBS domains are found at residues 220 to 281 (MIPR…PIKL) and 284 to 341 (IMRP…IRDE).

It belongs to the UPF0053 family.

Its subcellular location is the cell membrane. In Bacillus subtilis (strain 168), this protein is UPF0053 protein YugS (yugS).